A 176-amino-acid chain; its full sequence is Large ribosomal subunit protein uL22z (176 aa).

A compositionally biased stretch (basic and acidic residues) spans 154-163; that stretch reads KEEPVKKEPE. The disordered stretch occupies residues 154–176; it reads KEEPVKKEPETQLAAKSKKGASS.

This sequence belongs to the universal ribosomal protein uL22 family.

The polypeptide is Large ribosomal subunit protein uL22z (RPL17A) (Arabidopsis thaliana (Mouse-ear cress)).